We begin with the raw amino-acid sequence, 193 residues long: ATP-dependent Clp protease proteolytic subunit (193 aa).

Ser-98 functions as the Nucleophile in the catalytic mechanism. His-123 is a catalytic residue.

This sequence belongs to the peptidase S14 family. As to quaternary structure, fourteen ClpP subunits assemble into 2 heptameric rings which stack back to back to give a disk-like structure with a central cavity, resembling the structure of eukaryotic proteasomes.

The protein localises to the cytoplasm. It carries out the reaction Hydrolysis of proteins to small peptides in the presence of ATP and magnesium. alpha-casein is the usual test substrate. In the absence of ATP, only oligopeptides shorter than five residues are hydrolyzed (such as succinyl-Leu-Tyr-|-NHMec, and Leu-Tyr-Leu-|-Tyr-Trp, in which cleavage of the -Tyr-|-Leu- and -Tyr-|-Trp bonds also occurs).. Functionally, cleaves peptides in various proteins in a process that requires ATP hydrolysis. Has a chymotrypsin-like activity. Plays a major role in the degradation of misfolded proteins. This Histophilus somni (strain 2336) (Haemophilus somnus) protein is ATP-dependent Clp protease proteolytic subunit.